Here is a 357-residue protein sequence, read N- to C-terminus: DNA integrity scanning protein DisA (357 aa).

Residues 3–141 form the DAC domain; the sequence is RPTLRETVAR…GGERHVVADS (139 aa). ATP is bound by residues G70, L88, and 101-105; that span reads TRHRS.

Belongs to the DisA family. Homooctamer. Mg(2+) serves as cofactor.

It carries out the reaction 2 ATP = 3',3'-c-di-AMP + 2 diphosphate. In terms of biological role, participates in a DNA-damage check-point. DisA forms globular foci that rapidly scan along the chromosomes searching for lesions. Functionally, also has diadenylate cyclase activity, catalyzing the condensation of 2 ATP molecules into cyclic di-AMP (c-di-AMP). c-di-AMP likely acts as a signaling molecule that may couple DNA integrity with a cellular process. In Mycolicibacterium paratuberculosis (strain ATCC BAA-968 / K-10) (Mycobacterium paratuberculosis), this protein is DNA integrity scanning protein DisA.